Here is a 240-residue protein sequence, read N- to C-terminus: NDR1/HIN1-like protein 2 (240 aa).

A helical membrane pass occupies residues 57 to 77; it reads NILIAVAVILGVAALILWLIF. N-linked (GlcNAc...) asparagine glycosylation is found at N109, N141, N151, and N223.

In terms of tissue distribution, expressed at low levels in roots, rosette leaves, cauline leaves, stems, flowers and siliques.

It is found in the cell membrane. In terms of biological role, may play a role in plant immunity. This chain is NDR1/HIN1-like protein 2, found in Arabidopsis thaliana (Mouse-ear cress).